The following is a 227-amino-acid chain: Phage shock protein A homolog (227 aa).

The stretch at 33 to 125 (LRNMNSDLAK…AQMRKMHDKL (93 aa)) forms a coiled coil. The segment at 191–211 (SAPQDDMADLSAKYDTGGSSQ) is disordered.

This sequence belongs to the PspA/Vipp/IM30 family.

This is Phage shock protein A homolog (ydjF) from Bacillus subtilis (strain 168).